Reading from the N-terminus, the 274-residue chain is 4-diphosphocytidyl-2-C-methyl-D-erythritol kinase (274 aa).

Residue lysine 14 is part of the active site. 94–104 (PMQAGLGGGSS) serves as a coordination point for ATP. Aspartate 134 is a catalytic residue.

The protein belongs to the GHMP kinase family. IspE subfamily.

It carries out the reaction 4-CDP-2-C-methyl-D-erythritol + ATP = 4-CDP-2-C-methyl-D-erythritol 2-phosphate + ADP + H(+). It participates in isoprenoid biosynthesis; isopentenyl diphosphate biosynthesis via DXP pathway; isopentenyl diphosphate from 1-deoxy-D-xylulose 5-phosphate: step 3/6. Functionally, catalyzes the phosphorylation of the position 2 hydroxy group of 4-diphosphocytidyl-2C-methyl-D-erythritol. The chain is 4-diphosphocytidyl-2-C-methyl-D-erythritol kinase from Thermosipho melanesiensis (strain DSM 12029 / CIP 104789 / BI429).